The following is a 490-amino-acid chain: GTPase Der (490 aa).

EngA-type G domains are found at residues 3–166 and 200–373; these read PVVA…AEAM and IKLA…DSAT. Residues 9 to 16, 56 to 60, 118 to 121, 206 to 213, 253 to 257, and 318 to 321 contribute to the GTP site; these read GRPNVGKS, DTGGI, NKVD, GKPNVGKS, DTAGV, and NKWD. The region spanning 374–458 is the KH-like domain; it reads RRVSTSMLTR…PIQLRFQEGG (85 aa). Residues 470 to 490 form a disordered region; the sequence is TVSQERRRKRMVGHIRDKNKD.

Belongs to the TRAFAC class TrmE-Era-EngA-EngB-Septin-like GTPase superfamily. EngA (Der) GTPase family. As to quaternary structure, associates with the 50S ribosomal subunit.

Functionally, GTPase that plays an essential role in the late steps of ribosome biogenesis. In Shewanella pealeana (strain ATCC 700345 / ANG-SQ1), this protein is GTPase Der.